A 601-amino-acid chain; its full sequence is Glutathione-regulated potassium-efflux system protein KefB (601 aa).

The next 13 helical transmembrane spans lie at 4–24 (SDFL…VPLA), 29–49 (IGAV…GLGF), 55–75 (EILH…GLEL), 87–107 (IFGV…GLLM), 115–135 (AAVV…LQLM), 152–172 (VLLF…LLAG), 177–197 (HFDW…LIGG), 207–227 (FIAA…LVLG), 230–250 (LFMD…GVLL), 262–282 (AIDP…GMSL), 284–304 (LGVL…LVAV), 324–344 (MQFA…FSTA), and 356–376 (ALLL…MKLV). An RCK N-terminal domain is found at 400–519 (KPQVIVVGFG…AGVTQFSRET (120 aa)).

Belongs to the monovalent cation:proton antiporter 2 (CPA2) transporter (TC 2.A.37) family. KefB subfamily. As to quaternary structure, interacts with the regulatory subunit KefG.

It is found in the cell inner membrane. Its function is as follows. Pore-forming subunit of a potassium efflux system that confers protection against electrophiles. Catalyzes K(+)/H(+) antiport. The sequence is that of Glutathione-regulated potassium-efflux system protein KefB from Shigella boydii serotype 18 (strain CDC 3083-94 / BS512).